Here is a 403-residue protein sequence, read N- to C-terminus: Tyrosine--tRNA ligase (403 aa).

A 'HIGH' region motif is present at residues 43-52; that stretch reads PTAPDLHLGH. A 'KMSKS' region motif is present at residues 227–231; the sequence is KMSKS. Lysine 230 serves as a coordination point for ATP. The region spanning 338–399 is the S4 RNA-binding domain; the sequence is LPIAQLLKQT…GKRKFARVTI (62 aa).

This sequence belongs to the class-I aminoacyl-tRNA synthetase family. TyrS type 2 subfamily. Homodimer.

The protein localises to the cytoplasm. It catalyses the reaction tRNA(Tyr) + L-tyrosine + ATP = L-tyrosyl-tRNA(Tyr) + AMP + diphosphate + H(+). Catalyzes the attachment of tyrosine to tRNA(Tyr) in a two-step reaction: tyrosine is first activated by ATP to form Tyr-AMP and then transferred to the acceptor end of tRNA(Tyr). The sequence is that of Tyrosine--tRNA ligase from Nitrosospira multiformis (strain ATCC 25196 / NCIMB 11849 / C 71).